Reading from the N-terminus, the 179-residue chain is MSQKLKTTYQETIVPKLKEQFGYTNIHQVPKVIKITVNRGLGEASQNAKALESSKAELSTITGQQPVVTRAKKAIAGFKIREGMPVGVMVTLRGDRMYAFLDRLINLALPRIRDFRGISGNSFDGRGNYSLGIREQLIFPEIEYDKIDQIRGMDISIITTAKNDEEGRALLKEMGMPFR.

It belongs to the universal ribosomal protein uL5 family. In terms of assembly, part of the 50S ribosomal subunit; part of the 5S rRNA/L5/L18/L25 subcomplex. Contacts the 5S rRNA and the P site tRNA. Forms a bridge to the 30S subunit in the 70S ribosome.

Its function is as follows. This is one of the proteins that bind and probably mediate the attachment of the 5S RNA into the large ribosomal subunit, where it forms part of the central protuberance. In the 70S ribosome it contacts protein S13 of the 30S subunit (bridge B1b), connecting the 2 subunits; this bridge is implicated in subunit movement. Contacts the P site tRNA; the 5S rRNA and some of its associated proteins might help stabilize positioning of ribosome-bound tRNAs. In Microcystis aeruginosa (strain NIES-843 / IAM M-2473), this protein is Large ribosomal subunit protein uL5.